The sequence spans 320 residues: MIKKIGVLTSGGDAPGMNAAIRGVVRSALTEGLEVMGIYDGYLGLYEDRMVQLDRYSVSDMINRGGTFLGSARFPEFRDENIRAVAIENLKKRGIDALVVIGGDGSYMGAMRLTEMGFPCIGLPGTIDNDIKGTDYTIGFFTALSTVVEAIDRLRDTSSSHQRISVVEVMGRYCGDLTLAAAIAGGCEFVVVPEVEFSREDLVNEIKAGIAKGKKHAIVAITEHMCDVDELAHFIEKETGRETRATVLGHIQRGGSPVPYDRILASRMGAYAIELLLAGYGGRCVGIQNEQLVHHDIIDAIENMKRPFKGDWLDCAKKLY.

Residue Gly12 participates in ATP binding. ADP is bound by residues 22-26 (RGVVR) and 55-60 (RYSVSD). Residues 73-74 (RF) and 103-106 (GDGS) each bind ATP. A Mg(2+)-binding site is contributed by Asp104. 126–128 (TID) contacts substrate. Asp128 acts as the Proton acceptor in catalysis. Arg155 contacts ADP. Residues Arg163 and 170–172 (MGR) contribute to the substrate site. ADP contacts are provided by residues 186-188 (GCE), Lys212, and 214-216 (KKH). Residues Glu223, Arg244, and 250–253 (HIQR) contribute to the substrate site.

The protein belongs to the phosphofructokinase type A (PFKA) family. ATP-dependent PFK group I subfamily. Prokaryotic clade 'B1' sub-subfamily. As to quaternary structure, homotetramer. Mg(2+) serves as cofactor.

The protein resides in the cytoplasm. The catalysed reaction is beta-D-fructose 6-phosphate + ATP = beta-D-fructose 1,6-bisphosphate + ADP + H(+). Its pathway is carbohydrate degradation; glycolysis; D-glyceraldehyde 3-phosphate and glycerone phosphate from D-glucose: step 3/4. Its activity is regulated as follows. Allosterically activated by ADP and other diphosphonucleosides, and allosterically inhibited by phosphoenolpyruvate. Catalyzes the phosphorylation of D-fructose 6-phosphate to fructose 1,6-bisphosphate by ATP, the first committing step of glycolysis. This chain is ATP-dependent 6-phosphofructokinase isozyme 1, found in Escherichia coli O6:H1 (strain CFT073 / ATCC 700928 / UPEC).